A 257-amino-acid polypeptide reads, in one-letter code: Putative transcription factor R430 (257 aa).

2 disordered regions span residues Met1–Ser35 and Ser58–Ser77. Residues Thr7–Asn25 are compositionally biased toward low complexity. Residues Thr26 to Ser35 are compositionally biased toward basic and acidic residues.

The protein belongs to the nucleo-cytoplasmic large DNA viruses (NCLDVs) VLTF-3 family.

Functionally, putative transcription factor. This Acanthamoeba polyphaga (Amoeba) protein is Putative transcription factor R430.